The sequence spans 154 residues: SsrA-binding protein (154 aa).

This sequence belongs to the SmpB family.

It localises to the cytoplasm. In terms of biological role, required for rescue of stalled ribosomes mediated by trans-translation. Binds to transfer-messenger RNA (tmRNA), required for stable association of tmRNA with ribosomes. tmRNA and SmpB together mimic tRNA shape, replacing the anticodon stem-loop with SmpB. tmRNA is encoded by the ssrA gene; the 2 termini fold to resemble tRNA(Ala) and it encodes a 'tag peptide', a short internal open reading frame. During trans-translation Ala-aminoacylated tmRNA acts like a tRNA, entering the A-site of stalled ribosomes, displacing the stalled mRNA. The ribosome then switches to translate the ORF on the tmRNA; the nascent peptide is terminated with the 'tag peptide' encoded by the tmRNA and targeted for degradation. The ribosome is freed to recommence translation, which seems to be the essential function of trans-translation. In Lachnoclostridium phytofermentans (strain ATCC 700394 / DSM 18823 / ISDg) (Clostridium phytofermentans), this protein is SsrA-binding protein.